Reading from the N-terminus, the 37-residue chain is Photosystem I reaction center subunit VIII (37 aa).

A helical transmembrane segment spans residues 7-27; the sequence is LPSFFVPLVGLVFPAIAMASL.

This sequence belongs to the PsaI family.

The protein resides in the plastid. The protein localises to the chloroplast thylakoid membrane. May help in the organization of the PsaL subunit. The polypeptide is Photosystem I reaction center subunit VIII (Eucalyptus globulus subsp. globulus (Tasmanian blue gum)).